A 77-amino-acid chain; its full sequence is Teretoxin Tsu15.4 (77 aa).

An N-terminal signal peptide occupies residues 1 to 21 (MTKLTVLLLAILVLLPLATSN). A propeptide spanning residues 22–40 (SAADEALASLSGLLRRAKR) is cleaved from the precursor.

In terms of processing, contains 4 disulfide bonds. In terms of tissue distribution, expressed by the venom duct.

It localises to the secreted. The protein is Teretoxin Tsu15.4 of Terebra subulata (Chocolate spotted auger).